The sequence spans 514 residues: 2,3-bisphosphoglycerate-independent phosphoglycerate mutase (514 aa).

Positions 14 and 64 each coordinate Mn(2+). Serine 64 (phosphoserine intermediate) is an active-site residue. Residues histidine 125, 155 to 156, arginine 187, arginine 193, 263 to 266, and lysine 336 each bind substrate; these read RD and RADR. The Mn(2+) site is built by aspartate 403, histidine 407, aspartate 444, histidine 445, and histidine 463.

Belongs to the BPG-independent phosphoglycerate mutase family. Monomer. Mn(2+) is required as a cofactor.

It catalyses the reaction (2R)-2-phosphoglycerate = (2R)-3-phosphoglycerate. It participates in carbohydrate degradation; glycolysis; pyruvate from D-glyceraldehyde 3-phosphate: step 3/5. Functionally, catalyzes the interconversion of 2-phosphoglycerate and 3-phosphoglycerate. This Shewanella denitrificans (strain OS217 / ATCC BAA-1090 / DSM 15013) protein is 2,3-bisphosphoglycerate-independent phosphoglycerate mutase.